We begin with the raw amino-acid sequence, 411 residues long: Flagellum-associated coiled-coil domain-containing protein 1 (411 aa).

Positions 52-77 (SQPAKSTAFPRDKAQSRKLEESNKAP) are disordered. Over residues 61 to 74 (PRDKAQSRKLEESN) the composition is skewed to basic and acidic residues. Coiled coils occupy residues 124-220 (SDII…LKNM) and 278-328 (NESF…VVLE). Lys353 carries the post-translational modification N6-acetyllysine. The stretch at 355 to 385 (FQTKLAEAEEKYKSTIQVLTEENNSLRQKVL) forms a coiled coil.

It is found in the cytoplasm. Its subcellular location is the cytoplasmic granule. The protein resides in the cell projection. The protein localises to the cilium. It localises to the flagellum. In Rattus norvegicus (Rat), this protein is Flagellum-associated coiled-coil domain-containing protein 1.